Reading from the N-terminus, the 328-residue chain is D-cysteine desulfhydrase (328 aa).

Lys-51 is subject to N6-(pyridoxal phosphate)lysine.

This sequence belongs to the ACC deaminase/D-cysteine desulfhydrase family. Homodimer. The cofactor is pyridoxal 5'-phosphate.

It carries out the reaction D-cysteine + H2O = hydrogen sulfide + pyruvate + NH4(+) + H(+). Functionally, catalyzes the alpha,beta-elimination reaction of D-cysteine and of several D-cysteine derivatives. It could be a defense mechanism against D-cysteine. The polypeptide is D-cysteine desulfhydrase (Shigella sonnei (strain Ss046)).